Consider the following 69-residue polypeptide: Cytochrome c oxidase subunit 8A, mitochondrial (69 aa).

The N-terminal 25 residues, methionine 1 to glutamine 25, are a transit peptide targeting the mitochondrion. An SIFI-degron motif is present at residues serine 2–leucine 19. The Mitochondrial matrix portion of the chain corresponds to isoleucine 26–glycine 36. Residues threonine 37–serine 60 traverse the membrane as a helical segment. The Mitochondrial intermembrane segment spans residues histidine 61 to glutamate 69.

It belongs to the cytochrome c oxidase VIII family. Component of the cytochrome c oxidase (complex IV, CIV), a multisubunit enzyme composed of 14 subunits. The complex is composed of a catalytic core of 3 subunits MT-CO1, MT-CO2 and MT-CO3, encoded in the mitochondrial DNA, and 11 supernumerary subunits COX4I1 (or COX4I2), COX5A, COX5B, COX6A2 (or COX6A1), COX6B1 (or COX6B2), COX6C, COX7A1 (or COX7A2), COX7B, COX7C, COX8B and NDUFA4, which are encoded in the nuclear genome. The complex exists as a monomer or a dimer and forms supercomplexes (SCs) in the inner mitochondrial membrane with NADH-ubiquinone oxidoreductase (complex I, CI) and ubiquinol-cytochrome c oxidoreductase (cytochrome b-c1 complex, complex III, CIII), resulting in different assemblies (supercomplex SCI(1)III(2)IV(1) and megacomplex MCI(2)III(2)IV(2)). In response to mitochondrial stress, the precursor protein is ubiquitinated by the SIFI complex in the cytoplasm before mitochondrial import, leading to its degradation. Within the SIFI complex, UBR4 initiates ubiquitin chain that are further elongated or branched by KCMF1.

The protein resides in the mitochondrion inner membrane. It functions in the pathway energy metabolism; oxidative phosphorylation. In terms of biological role, component of the cytochrome c oxidase, the last enzyme in the mitochondrial electron transport chain which drives oxidative phosphorylation. The respiratory chain contains 3 multisubunit complexes succinate dehydrogenase (complex II, CII), ubiquinol-cytochrome c oxidoreductase (cytochrome b-c1 complex, complex III, CIII) and cytochrome c oxidase (complex IV, CIV), that cooperate to transfer electrons derived from NADH and succinate to molecular oxygen, creating an electrochemical gradient over the inner membrane that drives transmembrane transport and the ATP synthase. Cytochrome c oxidase is the component of the respiratory chain that catalyzes the reduction of oxygen to water. Electrons originating from reduced cytochrome c in the intermembrane space (IMS) are transferred via the dinuclear copper A center (CU(A)) of subunit 2 and heme A of subunit 1 to the active site in subunit 1, a binuclear center (BNC) formed by heme A3 and copper B (CU(B)). The BNC reduces molecular oxygen to 2 water molecules using 4 electrons from cytochrome c in the IMS and 4 protons from the mitochondrial matrix. This is Cytochrome c oxidase subunit 8A, mitochondrial (COX8A) from Bos taurus (Bovine).